Reading from the N-terminus, the 366-residue chain is Leucine dehydrogenase (366 aa).

K82 is an active-site residue. 182–188 (GVGNVAY) serves as a coordination point for NAD(+).

The protein belongs to the Glu/Leu/Phe/Val dehydrogenases family.

It catalyses the reaction L-leucine + NAD(+) + H2O = 4-methyl-2-oxopentanoate + NH4(+) + NADH + H(+). It functions in the pathway amino-acid degradation; L-leucine degradation; 4-methyl-2-oxopentanoate from L-leucine (dehydrogenase route): step 1/1. Functionally, catalyzes the reversible deamination of L-leucine to 4-methyl-2-oxopentanoate. In Bacillus cereus, this protein is Leucine dehydrogenase (ldh).